A 139-amino-acid polypeptide reads, in one-letter code: Nucleoside diphosphate kinase (139 aa).

Lys10, Phe58, Arg86, Thr92, Arg103, and Asn113 together coordinate ATP. The Pros-phosphohistidine intermediate role is filled by His116.

It belongs to the NDK family. In terms of assembly, homotetramer. Mg(2+) is required as a cofactor.

Its subcellular location is the cytoplasm. It catalyses the reaction a 2'-deoxyribonucleoside 5'-diphosphate + ATP = a 2'-deoxyribonucleoside 5'-triphosphate + ADP. The catalysed reaction is a ribonucleoside 5'-diphosphate + ATP = a ribonucleoside 5'-triphosphate + ADP. Major role in the synthesis of nucleoside triphosphates other than ATP. The ATP gamma phosphate is transferred to the NDP beta phosphate via a ping-pong mechanism, using a phosphorylated active-site intermediate. In Caulobacter sp. (strain K31), this protein is Nucleoside diphosphate kinase.